The primary structure comprises 230 residues: uncharacterized protein (230 aa).

A divalent metal cation contacts are provided by Glu-74, Glu-76, and Asp-105.

This sequence belongs to the FAH family.

This is an uncharacterized protein from Pyrococcus horikoshii (strain ATCC 700860 / DSM 12428 / JCM 9974 / NBRC 100139 / OT-3).